The primary structure comprises 252 residues: 2-succinyl-6-hydroxy-2,4-cyclohexadiene-1-carboxylate synthase (252 aa).

The protein belongs to the AB hydrolase superfamily. MenH family. As to quaternary structure, monomer.

The catalysed reaction is 5-enolpyruvoyl-6-hydroxy-2-succinyl-cyclohex-3-ene-1-carboxylate = (1R,6R)-6-hydroxy-2-succinyl-cyclohexa-2,4-diene-1-carboxylate + pyruvate. It functions in the pathway quinol/quinone metabolism; 1,4-dihydroxy-2-naphthoate biosynthesis; 1,4-dihydroxy-2-naphthoate from chorismate: step 3/7. The protein operates within quinol/quinone metabolism; menaquinone biosynthesis. Catalyzes a proton abstraction reaction that results in 2,5-elimination of pyruvate from 2-succinyl-5-enolpyruvyl-6-hydroxy-3-cyclohexene-1-carboxylate (SEPHCHC) and the formation of 2-succinyl-6-hydroxy-2,4-cyclohexadiene-1-carboxylate (SHCHC). The sequence is that of 2-succinyl-6-hydroxy-2,4-cyclohexadiene-1-carboxylate synthase from Escherichia coli (strain UTI89 / UPEC).